The following is a 328-amino-acid chain: DNA-directed RNA polymerase subunit alpha (328 aa).

Positions 1–232 (MHNSLAELIK…QHLAILVDLK (232 aa)) are alpha N-terminal domain (alpha-NTD). Residues 246–328 (FDPLLLHPVD…PPEGLKKLNQ (83 aa)) are alpha C-terminal domain (alpha-CTD).

The protein belongs to the RNA polymerase alpha chain family. As to quaternary structure, homodimer. The RNAP catalytic core consists of 2 alpha, 1 beta, 1 beta' and 1 omega subunit. When a sigma factor is associated with the core the holoenzyme is formed, which can initiate transcription.

The catalysed reaction is RNA(n) + a ribonucleoside 5'-triphosphate = RNA(n+1) + diphosphate. Its function is as follows. DNA-dependent RNA polymerase catalyzes the transcription of DNA into RNA using the four ribonucleoside triphosphates as substrates. This is DNA-directed RNA polymerase subunit alpha from Methylococcus capsulatus (strain ATCC 33009 / NCIMB 11132 / Bath).